The chain runs to 1114 residues: Kinesin-like protein KIN-12F (1114 aa).

A disordered region spans residues 1 to 84 (MADNRIAGSL…RSQVSASRPR (84 aa)). Composition is skewed to polar residues over residues 10–39 (LPTS…SNPD) and 48–80 (PNIH…QVSA). The 333-residue stretch at 104–436 (HVKVVVRIKP…LRFGERAKAM (333 aa)) folds into the Kinesin motor domain. 175–182 (GQNGSGKT) lines the ATP pocket. Coiled-coil stretches lie at residues 761–791 (QQEL…QTED), 872–942 (ARSF…LRRA), and 1038–1081 (EVLV…HKLE). The segment at 1092 to 1114 (NTLPESALQPLHQRNSAIEEEGM) is disordered.

It belongs to the TRAFAC class myosin-kinesin ATPase superfamily. Kinesin family. KIN-12 subfamily.

The sequence is that of Kinesin-like protein KIN-12F from Arabidopsis thaliana (Mouse-ear cress).